The chain runs to 265 residues: ATP synthase subunit a (265 aa).

6 helical membrane-spanning segments follow: residues V26–Y46, I88–I108, D132–I152, P168–A188, F195–A217, and L231–L251.

This sequence belongs to the ATPase A chain family. In terms of assembly, F-type ATPases have 2 components, CF(1) - the catalytic core - and CF(0) - the membrane proton channel. CF(1) has five subunits: alpha(3), beta(3), gamma(1), delta(1), epsilon(1). CF(0) has three main subunits: a(1), b(2) and c(9-12). The alpha and beta chains form an alternating ring which encloses part of the gamma chain. CF(1) is attached to CF(0) by a central stalk formed by the gamma and epsilon chains, while a peripheral stalk is formed by the delta and b chains.

The protein resides in the cell inner membrane. Key component of the proton channel; it plays a direct role in the translocation of protons across the membrane. This is ATP synthase subunit a from Histophilus somni (strain 129Pt) (Haemophilus somnus).